We begin with the raw amino-acid sequence, 96 residues long: uncharacterized protein (96 aa).

3 helical membrane passes run 2 to 22 (FIFN…ICYF), 38 to 58 (AGLK…TVML), and 68 to 88 (LTLA…QLIV).

It is found in the membrane. This is an uncharacterized protein from Schizosaccharomyces pombe (strain 972 / ATCC 24843) (Fission yeast).